The following is a 300-amino-acid chain: Cell adhesion molecule CEACAM19 (300 aa).

The signal sequence occupies residues 1 to 32; sequence MEIPMGTQGCFSKSLLLSASILVLWMLQGSQA. The Extracellular portion of the chain corresponds to 33-157; it reads ALYIQKIPEQ…PSTHLPTNAG (125 aa). Asn-104 carries N-linked (GlcNAc...) asparagine glycosylation. The helical transmembrane segment at 158–178 threads the bilayer; sequence ILAATIIGSLAAGALLISCIA. At 179–300 the chain is on the cytoplasmic side; that stretch reads YLLVTRNWRG…APYCQLVPTS (122 aa). The tract at residues 259-291 is disordered; the sequence is SINPARPLPTPPHLQAEPENHQYQQDLLNPDPA.

It belongs to the immunoglobulin superfamily. CEA family. In terms of tissue distribution, ubiquitous with highest expression in prostate, uterus, fetal brain, mammary gland, adrenal gland, skeletal muscle, small intestine, and kidney, and lower expression in lung, cerebellum, testis, liver, pancreas, bone marrow and ovary.

The protein localises to the membrane. This Homo sapiens (Human) protein is Cell adhesion molecule CEACAM19.